A 318-amino-acid polypeptide reads, in one-letter code: Biotin synthase (318 aa).

Residues 44–273 form the Radical SAM core domain; it reads LCGNKFDLCT…TVQIRLAGGR (230 aa). The [4Fe-4S] cluster site is built by C62, C66, and C69. Residues S106, C138, C198, and R268 each contribute to the [2Fe-2S] cluster site.

The protein belongs to the radical SAM superfamily. Biotin synthase family. As to quaternary structure, homodimer. [4Fe-4S] cluster is required as a cofactor. It depends on [2Fe-2S] cluster as a cofactor.

The catalysed reaction is (4R,5S)-dethiobiotin + (sulfur carrier)-SH + 2 reduced [2Fe-2S]-[ferredoxin] + 2 S-adenosyl-L-methionine = (sulfur carrier)-H + biotin + 2 5'-deoxyadenosine + 2 L-methionine + 2 oxidized [2Fe-2S]-[ferredoxin]. It functions in the pathway cofactor biosynthesis; biotin biosynthesis; biotin from 7,8-diaminononanoate: step 2/2. Catalyzes the conversion of dethiobiotin (DTB) to biotin by the insertion of a sulfur atom into dethiobiotin via a radical-based mechanism. The protein is Biotin synthase of Clostridium botulinum (strain Hall / ATCC 3502 / NCTC 13319 / Type A).